The chain runs to 266 residues: Uxu operon regulator (266 aa).

Residues 23-91 (NRTYTRIGQL…KGSGVYVVRT (69 aa)) form the HTH gntR-type domain. Positions 51-70 (EREISEKFGVSRTIVREAMV) form a DNA-binding region, H-T-H motif.

Functionally, repressor for the uxuRBA operon. This chain is Uxu operon regulator (uxuR), found in Haemophilus influenzae (strain ATCC 51907 / DSM 11121 / KW20 / Rd).